The primary structure comprises 642 residues: Rhotekin-2 (642 aa).

Positions 30–105 (IKRKKIRESM…AQKRTGHQDF (76 aa)) constitute an REM-1 domain. The PH domain maps to 306–413 (LDMMSGFLSQ…WLDSLWQHIY (108 aa)). Disordered regions lie at residues 505 to 563 (TVLS…GRPS) and 575 to 642 (LQKS…PKAW). Composition is skewed to basic and acidic residues over residues 597-615 (PEKRAEESDLPEYTKKEYI) and 632-642 (SFREKMNPKAW).

This chain is Rhotekin-2 (rtkn2), found in Danio rerio (Zebrafish).